The chain runs to 166 residues: NAD(P)H-quinone oxidoreductase subunit I, chloroplastic (166 aa).

4Fe-4S ferredoxin-type domains lie at 55 to 84 and 95 to 124; these read GRIH…VDWK and LNYS…MTEE. 8 residues coordinate [4Fe-4S] cluster: cysteine 64, cysteine 67, cysteine 70, cysteine 74, cysteine 104, cysteine 107, cysteine 110, and cysteine 114.

The protein belongs to the complex I 23 kDa subunit family. In terms of assembly, NDH is composed of at least 16 different subunits, 5 of which are encoded in the nucleus. [4Fe-4S] cluster serves as cofactor.

The protein resides in the plastid. The protein localises to the chloroplast thylakoid membrane. The enzyme catalyses a plastoquinone + NADH + (n+1) H(+)(in) = a plastoquinol + NAD(+) + n H(+)(out). The catalysed reaction is a plastoquinone + NADPH + (n+1) H(+)(in) = a plastoquinol + NADP(+) + n H(+)(out). NDH shuttles electrons from NAD(P)H:plastoquinone, via FMN and iron-sulfur (Fe-S) centers, to quinones in the photosynthetic chain and possibly in a chloroplast respiratory chain. The immediate electron acceptor for the enzyme in this species is believed to be plastoquinone. Couples the redox reaction to proton translocation, and thus conserves the redox energy in a proton gradient. The chain is NAD(P)H-quinone oxidoreductase subunit I, chloroplastic from Guardiola tulocarpus.